Consider the following 278-residue polypeptide: MANYTAADIKALRERTGAGMMDVKKALDEANGDAEKAIEIIRIKGLKGATKREGRSTAEGLVAAKVAGGVGVMIEVNCETDFVAKADKFIQLADKVLAVAVESGAADIETLLATEVDGKPLSEVVVEEGAILGEKVVVRRISRLEGGTVDAYLHKTSKDLPAQVGVLFAVDGEGEAAATAAHDVAVHIAAMAPNYLTREDVPADLVESERRIAEETAKAEGKPEAAMTKIVEGRVTGFYKGEVLVDQAFAKDAKKSVAQVLEEAGVKGTAFARFRVGS.

Residues 80-83 form an involved in Mg(2+) ion dislocation from EF-Tu region; sequence TDFV.

Belongs to the EF-Ts family.

Its subcellular location is the cytoplasm. Associates with the EF-Tu.GDP complex and induces the exchange of GDP to GTP. It remains bound to the aminoacyl-tRNA.EF-Tu.GTP complex up to the GTP hydrolysis stage on the ribosome. The polypeptide is Elongation factor Ts (Arthrobacter sp. (strain FB24)).